A 527-amino-acid chain; its full sequence is N-acetylglucosamine-1-phosphodiester alpha-N-acetylglucosaminidase (527 aa).

Residues 1–25 form the signal peptide; sequence MASSMGRFLLFFIALRGFLLEASGD. Residues 26–49 constitute a propeptide, removed in mature form; that stretch reads FGSGASRDDDVLLPYSRARARLAR. The Lumenal segment spans residues 50-463; the sequence is DCTRVHAGRL…SLLTRTTWLA (414 aa). 5 cysteine pairs are disulfide-bonded: C116–C149, C133–C324, C308–C315, C363–C374, and C381–C390. N209, N215, and N297 each carry an N-linked (GlcNAc...) asparagine glycan. Positions 359-391 constitute an EGF-like domain; sequence DKLDCGPANCSQHGLCTETGCRCEAGWTGSNCS. N367, N389, and N421 each carry an N-linked (GlcNAc...) asparagine glycan. The chain crosses the membrane as a helical span at residues 464-484; that stretch reads ITLALAFLLLISTAANVSLFL. The Cytoplasmic portion of the chain corresponds to 485 to 527; it reads GSRAARRRHLDGAYVYHPLQEVNGEHPAAEKEQLGDSSNPFKD. A mediates the interaction with AP4M1 region spans residues 498 to 505; the sequence is YVYHPLQE. The Tyrosine-based internalization motif signature appears at 500–503; sequence YHPL. Positions 523–527 match the NPF internalization motif motif; that stretch reads NPFKD.

In terms of assembly, homotetramer arranged as two disulfide-linked homodimers. Interacts with AP4M1. Glycosylated. Contains complex N-linked oligosaccharides with appreciable amounts of sialic acid. Post-translationally, the precursor is cleaved and activated in the trans-Golgi network by a furin endopeptidase.

The protein localises to the golgi apparatus. It is found in the golgi stack membrane. The protein resides in the trans-Golgi network. The enzyme catalyses N(4)-[6-(N-acetyl-alpha-D-glucosaminyl-1-phospho)-alpha-D-mannosyl-(1-&gt;2)-alpha-D-mannosyl-(glycan)]-L-asparaginyl-[protein] + H2O = N(4)-[6-phospho-alpha-D-mannosyl-(1-&gt;2)-alpha-D-mannosyl-(glycan)]-L-asparaginyl-[protein] + N-acetyl-D-glucosamine + H(+). It participates in protein modification; protein glycosylation. Functionally, catalyzes the second step in the formation of the mannose 6-phosphate targeting signal on lysosomal enzyme oligosaccharides by removing GlcNAc residues from GlcNAc-alpha-P-mannose moieties, which are formed in the first step. Also hydrolyzes UDP-GlcNAc, a sugar donor for Golgi N-acetylglucosaminyltransferases. The protein is N-acetylglucosamine-1-phosphodiester alpha-N-acetylglucosaminidase (NAGPA) of Bos taurus (Bovine).